Consider the following 278-residue polypeptide: Sulfur carrier protein FdhD (278 aa).

Cysteine 121 serves as the catalytic Cysteine persulfide intermediate. Position 260–265 (260–265 (FCKPGR)) interacts with Mo-bis(molybdopterin guanine dinucleotide).

This sequence belongs to the FdhD family.

Its subcellular location is the cytoplasm. Its function is as follows. Required for formate dehydrogenase (FDH) activity. Acts as a sulfur carrier protein that transfers sulfur from IscS to the molybdenum cofactor prior to its insertion into FDH. The protein is Sulfur carrier protein FdhD of Salmonella heidelberg (strain SL476).